The sequence spans 965 residues: Iron-responsive element-binding protein 2 (965 aa).

The segment at 142 to 170 (NAPNPGGGEAQKPTAKLSPLKGQPRKLPC) is disordered. The [4Fe-4S] cluster site is built by cysteine 514, cysteine 580, and cysteine 583.

It belongs to the aconitase/IPM isomerase family. [4Fe-4S] cluster serves as cofactor. In terms of processing, ubiquitinated and degraded by the proteasome in presence of high level of iron and oxygen.

Its subcellular location is the cytoplasm. In terms of biological role, RNA-binding protein that binds to iron-responsive elements (IRES), which are stem-loop structures found in the 5'-UTR of ferritin, and delta aminolevulinic acid synthase mRNAs, and in the 3'-UTR of transferrin receptor mRNA. Binding to the IRE element in ferritin results in the repression of its mRNA translation. Binding of the protein to the transferrin receptor mRNA inhibits the degradation of this otherwise rapidly degraded mRNA. This Gallus gallus (Chicken) protein is Iron-responsive element-binding protein 2 (IREB2).